The following is a 2570-amino-acid chain: Stabilin-1 (2570 aa).

The N-terminal stretch at 1–25 is a signal peptide; sequence MAGPRGLLPLCLLAFCLAGFSFVRG. Residues 26–2478 are Extracellular-facing; it reads QVLFKGCDVK…LAPEAPPVAA (2453 aa). EGF-like domains are found at residues 110–148, 156–193, 195–229, and 232–271; these read HECP…SACQ, FGPD…PHCD, ELPV…QGSE, and APNP…MVCL. Intrachain disulfides connect C112-C126, C120-C136, C138-C147, C160-C171, C164-C181, C183-C192, C199-C210, C204-C217, C236-C247, C241-C257, and C259-C270. The N-linked (GlcNAc...) asparagine glycan is linked to N133. 7 N-linked (GlcNAc...) asparagine glycosylation sites follow: N286, N312, N413, N606, N673, N712, and N745. 2 FAS1 domains span residues 356–494 and 506–641; these read YGHL…TGLR and KRTI…DGIL. The 41-residue stretch at 728-768 folds into the EGF-like 5 domain; the sequence is DCTQCPGGFSNPCYGKGNCSDGIQGNGACLCFPDYKGIACH. Cystine bridges form between C732–C746, C740–C756, and C758–C767. N-linked (GlcNAc...) asparagine glycosylation is present at N816. EGF-like domains lie at 818 to 858, 861 to 903, 904 to 946, and 947 to 986; these read SMGD…DGFS, PSNP…RVCV, AIDE…YQCS, and PIDP…DGFS. 10 cysteine pairs are disulfide-bonded: C822-C837, C831-C846, C865-C879, C873-C889, C891-C902, C908-C922, C916-C932, C934-C945, C951-C964, and C958-C974. FAS1 domains follow at residues 988 to 1118 and 1128 to 1253; these read YGDI…SQVL and GQGL…SGVL. 6 N-linked (GlcNAc...) asparagine glycosylation sites follow: N1087, N1096, N1170, N1178, N1222, and N1274. The region spanning 1327-1392 is the Laminin EGF-like 1 domain; sequence TLCEPCPGGL…CDCAHGLCQE (66 aa). Cystine bridges form between C1332–C1346, C1340–C1356, and C1358–C1367. N1378 is a glycosylation site (N-linked (GlcNAc...) asparagine). 15 cysteine pairs are disulfide-bonded: C1379–C1390, C1383–C1400, C1402–C1411, C1420–C1430, C1424–C1440, C1442–C1453, C1459–C1472, C1466–C1482, C1484–C1495, C1501–C1514, C1508–C1524, C1526–C1538, C1544–C1557, C1551–C1567, and C1569–C1581. EGF-like domains are found at residues 1416–1454, 1455–1496, 1497–1539, and 1540–1582; these read TSPQ…IFCS, EVDP…ELCQ, EINS…RTCE, and LLDP…LTCR. N-linked (GlcNAc...) asparagine glycosylation occurs at N1471. FAS1 domains are found at residues 1582 to 1708 and 1724 to 1864; these read RARV…DRVL and PRRN…DQLL. N-linked (GlcNAc...) asparagine glycosylation is found at N1626 and N1727. Residues 1966–2031 form the Laminin EGF-like 2 domain; it reads SECQACPGGP…RCTVHGRCDE (66 aa). Disulfide bonds link C1971–C1985, C1979–C1995, C1997–C2006, C2018–C2029, C2023–C2039, C2041–C2050, C2060–C2070, C2064–C2076, C2078–C2089, C2095–C2108, C2102–C2117, C2119–C2130, C2136–C2150, C2144–C2160, and C2162–C2173. 3 EGF-like domains span residues 2056 to 2090, 2091 to 2131, and 2132 to 2174; these read LQPV…RVCT, VADL…WSCR, and ARNP…LQCL. Residue N2107 is glycosylated (N-linked (GlcNAc...) asparagine). The Link domain occupies 2206 to 2301; it reads RAGVFHLQAT…SERWDAYCFR (96 aa). 9 N-linked (GlcNAc...) asparagine glycosylation sites follow: N2222, N2261, N2290, N2334, N2347, N2379, N2393, N2400, and N2424. 2 disulfide bridges follow: C2230-C2299 and C2254-C2275. Residues 2322–2459 enclose the FAS1 7 domain; sequence NGKLLDVLAA…GIIHALASPL (138 aa). Residues 2479–2499 form a helical membrane-spanning segment; that stretch reads GVGAVLAAGALLGLVAGALYL. Residues 2500–2570 lie on the Cytoplasmic side of the membrane; sequence RARGKPMGFG…PDTQRILTVK (71 aa).

As to quaternary structure, interacts with CHID1. High levels found in spleen, lymph node, liver and placenta. Also expressed in endothelial cells.

Its subcellular location is the membrane. Acts as a scavenger receptor for acetylated low density lipoprotein. Binds to both Gram-positive and Gram-negative bacteria and may play a role in defense against bacterial infection. When inhibited in endothelial tube formation assays, there is a marked decrease in cell-cell interactions, suggesting a role in angiogenesis. Involved in the delivery of newly synthesized CHID1/SI-CLP from the biosynthetic compartment to the endosomal/lysosomal system. The protein is Stabilin-1 (STAB1) of Homo sapiens (Human).